Consider the following 228-residue polypeptide: Small ribosomal subunit protein uS3 (228 aa).

Residues 39–107 enclose the KH type-2 domain; sequence VREYLQDKLK…PVHINIEEIR (69 aa).

Belongs to the universal ribosomal protein uS3 family. In terms of assembly, part of the 30S ribosomal subunit. Forms a tight complex with proteins S10 and S14.

Functionally, binds the lower part of the 30S subunit head. Binds mRNA in the 70S ribosome, positioning it for translation. This is Small ribosomal subunit protein uS3 from Pseudomonas aeruginosa (strain UCBPP-PA14).